The following is a 315-amino-acid chain: Methionyl-tRNA formyltransferase (315 aa).

Ser113–Pro116 contributes to the (6S)-5,6,7,8-tetrahydrofolate binding site.

This sequence belongs to the Fmt family.

It carries out the reaction L-methionyl-tRNA(fMet) + (6R)-10-formyltetrahydrofolate = N-formyl-L-methionyl-tRNA(fMet) + (6S)-5,6,7,8-tetrahydrofolate + H(+). Functionally, attaches a formyl group to the free amino group of methionyl-tRNA(fMet). The formyl group appears to play a dual role in the initiator identity of N-formylmethionyl-tRNA by promoting its recognition by IF2 and preventing the misappropriation of this tRNA by the elongation apparatus. This Escherichia coli O17:K52:H18 (strain UMN026 / ExPEC) protein is Methionyl-tRNA formyltransferase.